The sequence spans 354 residues: Glutamine synthetase cytosolic isozyme 1-3 (354 aa).

Ser-2 is modified (N-acetylserine). Phosphoserine is present on residues Ser-2 and Ser-48. The GS beta-grasp domain occupies 19–99; it reads IIAEYIWIGG…VMCDAYTPAG (81 aa). The 249-residue stretch at 106 to 354 folds into the GS catalytic domain; sequence KRHNAAKIFS…SMIAETTILG (249 aa).

This sequence belongs to the glutamine synthetase family. Homooctamer. Expressed in the pericycle in the region of mature root.

It localises to the cytoplasm. It carries out the reaction L-glutamate + NH4(+) + ATP = L-glutamine + ADP + phosphate + H(+). Its function is as follows. Low-affinity glutamine synthetase. May contribute to the homeostatic control of glutamine synthesis in roots. This chain is Glutamine synthetase cytosolic isozyme 1-3 (GLN1-3), found in Arabidopsis thaliana (Mouse-ear cress).